The sequence spans 322 residues: Arginase (322 aa).

Mn(2+)-binding residues include H113, D141, H143, and D145. Substrate contacts are provided by residues 143 to 147 (HADIN), 154 to 156 (SGN), and D200. Mn(2+) is bound by residues D247 and D249. Positions 261 and 292 each coordinate substrate.

It belongs to the arginase family. As to quaternary structure, homotrimer. It depends on Mn(2+) as a cofactor.

It carries out the reaction L-arginine + H2O = urea + L-ornithine. It functions in the pathway nitrogen metabolism; urea cycle; L-ornithine and urea from L-arginine: step 1/1. This is Arginase (ARG) from Coccidioides immitis (strain RS) (Valley fever fungus).